We begin with the raw amino-acid sequence, 704 residues long: DNA ligase (704 aa).

NAD(+)-binding positions include Asp44 to Asp48, Ser93 to Ile94, and Glu125. Lys127 acts as the N6-AMP-lysine intermediate in catalysis. Arg148, Glu184, Lys300, and Lys324 together coordinate NAD(+). Zn(2+) contacts are provided by Cys418, Cys421, Cys436, and Cys442. The BRCT domain occupies Ile625–Lys704.

This sequence belongs to the NAD-dependent DNA ligase family. LigA subfamily. Requires Mg(2+) as cofactor. Mn(2+) is required as a cofactor.

It catalyses the reaction NAD(+) + (deoxyribonucleotide)n-3'-hydroxyl + 5'-phospho-(deoxyribonucleotide)m = (deoxyribonucleotide)n+m + AMP + beta-nicotinamide D-nucleotide.. DNA ligase that catalyzes the formation of phosphodiester linkages between 5'-phosphoryl and 3'-hydroxyl groups in double-stranded DNA using NAD as a coenzyme and as the energy source for the reaction. It is essential for DNA replication and repair of damaged DNA. The protein is DNA ligase of Pelobacter propionicus (strain DSM 2379 / NBRC 103807 / OttBd1).